We begin with the raw amino-acid sequence, 130 residues long: Small ribosomal subunit protein uS8 (130 aa).

Belongs to the universal ribosomal protein uS8 family. Part of the 30S ribosomal subunit. Contacts proteins S5 and S12.

One of the primary rRNA binding proteins, it binds directly to 16S rRNA central domain where it helps coordinate assembly of the platform of the 30S subunit. This chain is Small ribosomal subunit protein uS8, found in Aeromonas hydrophila subsp. hydrophila (strain ATCC 7966 / DSM 30187 / BCRC 13018 / CCUG 14551 / JCM 1027 / KCTC 2358 / NCIMB 9240 / NCTC 8049).